We begin with the raw amino-acid sequence, 940 residues long: Valine--tRNA ligase (940 aa).

A 'HIGH' region motif is present at residues 47 to 57; sequence PNVTGILHMGH. Positions 564–568 match the 'KMSKS' region motif; that stretch reads KLSKS. Lys-567 lines the ATP pocket. Positions 873 to 937 form a coiled coil; it reads VEHIAKEKTR…ELQSILDKLA (65 aa).

It belongs to the class-I aminoacyl-tRNA synthetase family. ValS type 1 subfamily. Monomer.

Its subcellular location is the cytoplasm. The catalysed reaction is tRNA(Val) + L-valine + ATP = L-valyl-tRNA(Val) + AMP + diphosphate. Catalyzes the attachment of valine to tRNA(Val). As ValRS can inadvertently accommodate and process structurally similar amino acids such as threonine, to avoid such errors, it has a 'posttransfer' editing activity that hydrolyzes mischarged Thr-tRNA(Val) in a tRNA-dependent manner. The chain is Valine--tRNA ligase from Chlamydia abortus (strain DSM 27085 / S26/3) (Chlamydophila abortus).